A 391-amino-acid chain; its full sequence is Phosphoglycerate kinase (391 aa).

Substrate-binding positions include 21-23 (DLN), Arg-36, 59-62 (HLGR), Arg-114, and Arg-147. Residues Lys-198, Glu-315, and 344 to 347 (GGDT) each bind ATP.

Belongs to the phosphoglycerate kinase family. Monomer.

It localises to the cytoplasm. It carries out the reaction (2R)-3-phosphoglycerate + ATP = (2R)-3-phospho-glyceroyl phosphate + ADP. Its pathway is carbohydrate degradation; glycolysis; pyruvate from D-glyceraldehyde 3-phosphate: step 2/5. The sequence is that of Phosphoglycerate kinase from Haemophilus ducreyi (strain 35000HP / ATCC 700724).